We begin with the raw amino-acid sequence, 289 residues long: Pteridine reductase 1 (289 aa).

14–41 (GAAKRLGSSIAEALHAEGYTVCLHYHRS) lines the NADP(+) pocket. Residue S176 coordinates substrate. The Proton acceptor role is filled by Y195. Residue 195-199 (YTMAK) participates in NADP(+) binding.

The protein belongs to the short-chain dehydrogenases/reductases (SDR) family. Homotetramer.

It carries out the reaction (6R)-L-erythro-5,6,7,8-tetrahydrobiopterin + 2 NADP(+) = L-erythro-biopterin + 2 NADPH + 2 H(+). Its pathway is cofactor biosynthesis; tetrahydrobiopterin biosynthesis; tetrahydrobiopterin from biopterin: step 1/1. Functionally, exhibits a NADPH-dependent biopterin reductase activity. Has good activity with folate and significant activity with dihydrofolate and dihydrobiopterin, but not with quinonoid dihydrobiopterin. Confers resistance to methotrexate (MTX). The polypeptide is Pteridine reductase 1 (PTR1) (Leishmania tarentolae (Sauroleishmania tarentolae)).